The sequence spans 494 residues: Endoglucanase 1 (494 aa).

The first 25 residues, Met1–Ala25, serve as a signal peptide directing secretion. Asp82 functions as the Nucleophile in the catalytic mechanism. N-linked (GlcNAc...) asparagine glycosylation is found at Asn254 and Asn359. Residues His411, Asp462, and Glu471 contribute to the active site.

It belongs to the glycosyl hydrolase 9 (cellulase E) family.

It carries out the reaction Endohydrolysis of (1-&gt;4)-beta-D-glucosidic linkages in cellulose, lichenin and cereal beta-D-glucans.. Its function is as follows. Involved in ripening fruit process. This is Endoglucanase 1 (CEL1) from Persea americana (Avocado).